A 129-amino-acid polypeptide reads, in one-letter code: Tumor necrosis factor receptor superfamily member 12A (129 aa).

Positions 1–27 (MARGSLRRLLRLLVLGLWLALLRSVAG) are cleaved as a signal peptide. Residues 28 to 80 (EQAPGTAPCSRGSSWSADLDKCMDCASCRARPHSDFCLGCAAAPPAPFRLLWP) lie on the Extracellular side of the membrane. 3 disulfide bridges follow: Cys-36/Cys-49, Cys-52/Cys-67, and Cys-55/Cys-64. The TNFR-Cys; atypical repeat unit spans residues 36-67 (CSRGSSWSADLDKCMDCASCRARPHSDFCLGC). The helical transmembrane segment at 81–101 (ILGGALSLTFVLGLLSGFLVW) threads the bilayer. Topologically, residues 102-129 (RRCRRREKFTTPIEETGGEGCPAVALIQ) are cytoplasmic.

In terms of assembly, associates with TRAF1 and TRAF2, and probably also with TRAF3. As to expression, highly expressed in heart, placenta and kidney. Intermediate expression in lung, skeletal muscle and pancreas.

The protein localises to the membrane. Functionally, receptor for TNFSF12/TWEAK. Weak inducer of apoptosis in some cell types. Promotes angiogenesis and the proliferation of endothelial cells. May modulate cellular adhesion to matrix proteins. This Homo sapiens (Human) protein is Tumor necrosis factor receptor superfamily member 12A (TNFRSF12A).